Consider the following 312-residue polypeptide: R2-like ligand binding oxidase (312 aa).

Residues Glu68, Glu101, and His104 each contribute to the Mn(2+) site. Positions 71-162 (VTQDIQPFMA…AAQVRASATY (92 aa)) form a cross-link, 3-(O4'-tyrosyl)-valine (Val-Tyr). Glu101 contacts Fe cation. Glu167, Glu202, and His205 together coordinate Fe cation.

The protein belongs to the ribonucleoside diphosphate reductase small chain family. R2-like ligand binding oxidase subfamily. As to quaternary structure, homodimer. Fe cation is required as a cofactor. It depends on Mn(2+) as a cofactor.

Probable oxidase that might be involved in lipid metabolism. The protein is R2-like ligand binding oxidase of Mycobacterium sp. (strain KMS).